We begin with the raw amino-acid sequence, 739 residues long: MFLLLALLTELGRLQAHEGSEGIFLHVTVPRKIKSNDSEVSERKMIYIITIDGQPYTLHLGKQSFLPQNFLVYTYNETGSLHSVSPYFMMHCHYQGYAAEFPNSFVTLSICSGLRGFLQFENISYGIEPVESSARFEHIIYQMKNNDPNVSILAVNYSHIWQKDQPYKVPLNSQIKNLSKLLPQYLEIYIIVEKALYDYMGSEMMAVTQKIVQVIGLVNTMFTQFKLTVILSSLELWSNENQISTSGDADDILQRFLAWKRDYLILRPHDIAYLLVYRKHPKYVGATFPGTVCNKSYDAGIAMYPDAIGLEGFSVIIAQLLGLNVGLTYDDITQCFCLRATCIMNHEAVSASGRKIFSNCSMHDYRYFVSKFETKCLQKLSNLQPLHQNQPVCGNGILESNEECDCGNKNECQFKKCCDYNTCKLKGSVKCGSGPCCTSKCELSIAGTPCRKSIDPECDFTEYCNGTSSNCVPDTYALNGRLCKLGTAYCYNGQCQTTDNQCAKIFGKGAQGAPFACFKEVNSLHERSENCGFKNSQPLPCERKDVLCGKLACVQPHKNANKSDAQSTVYSYIQDHVCVSIATGSSMRSDGTDNAYVADGTMCGPEMYCVNKTCRKVHLMGYNCNATTKCKGKGICNNFGNCQCFPGHRPPDCKFQFGSPGGSIDDGNFQKSGDFYTEKGYNTHWNNWFILSFCIFLPFFIVFTTVIFKRNEISKSCNRENAEYNRNSSVVSESDDVGH.

A signal peptide spans 1 to 16 (MFLLLALLTELGRLQA). Positions 17 to 184 (HEGSEGIFLH…IKNLSKLLPQ (168 aa)) are excised as a propeptide. N-linked (GlcNAc...) asparagine glycans are attached at residues Asn36, Asn76, Asn122, Asn149, Asn156, Asn177, and Asn294. Over 177–687 (NLSKLLPQYL…EKGYNTHWNN (511 aa)) the chain is Extracellular. Residues 184-381 (QYLEIYIIVE…FETKCLQKLS (198 aa)) form the Peptidase M12B domain. 4 disulfides stabilise this stretch: Cys293–Cys376, Cys335–Cys360, Cys337–Cys342, and Cys450–Cys471. N-linked (GlcNAc...) asparagine glycans are attached at residues Asn359, Asn465, Asn561, Asn611, and Asn625. The 90-residue stretch at 390-479 (QPVCGNGILE…NCVPDTYALN (90 aa)) folds into the Disintegrin domain. An EGF-like domain is found at 620–654 (MGYNCNATTKCKGKGICNNFGNCQCFPGHRPPDCK). Disulfide bonds link Cys624/Cys636, Cys630/Cys642, and Cys644/Cys653. Residues 688 to 708 (WFILSFCIFLPFFIVFTTVIF) traverse the membrane as a helical segment. Over 709–739 (KRNEISKSCNRENAEYNRNSSVVSESDDVGH) the chain is Cytoplasmic.

Post-translationally, the prodomain and the metalloprotease-like domain are cleaved during the epididymal maturation of the spermatozoa. As to expression, expressed specifically in testis.

Its subcellular location is the membrane. Its function is as follows. Sperm surface membrane protein that may be involved in spermatogenesis and fertilization. This is a non catalytic metalloprotease-like protein. The chain is Disintegrin and metalloproteinase domain-containing protein 18 (ADAM18) from Homo sapiens (Human).